A 424-amino-acid chain; its full sequence is uncharacterized protein (424 aa).

This is an uncharacterized protein from Orgyia pseudotsugata (Douglas-fir tussock moth).